The primary structure comprises 331 residues: Fructose-1,6-bisphosphatase class 1 (331 aa).

Mg(2+) contacts are provided by Glu-88, Asp-108, Leu-110, and Asp-111. Substrate is bound by residues 111-114 and Asn-201; that span reads DGSS. Glu-273 contacts Mg(2+).

The protein belongs to the FBPase class 1 family. In terms of assembly, homotetramer. The cofactor is Mg(2+).

The protein resides in the cytoplasm. The catalysed reaction is beta-D-fructose 1,6-bisphosphate + H2O = beta-D-fructose 6-phosphate + phosphate. It functions in the pathway carbohydrate biosynthesis; gluconeogenesis. This chain is Fructose-1,6-bisphosphatase class 1, found in Methylobacillus flagellatus (strain ATCC 51484 / DSM 6875 / VKM B-1610 / KT).